The primary structure comprises 309 residues: Methionyl-tRNA formyltransferase (309 aa).

(6S)-5,6,7,8-tetrahydrofolate is bound at residue 109-112 (SLLP).

This sequence belongs to the Fmt family.

The catalysed reaction is L-methionyl-tRNA(fMet) + (6R)-10-formyltetrahydrofolate = N-formyl-L-methionyl-tRNA(fMet) + (6S)-5,6,7,8-tetrahydrofolate + H(+). Attaches a formyl group to the free amino group of methionyl-tRNA(fMet). The formyl group appears to play a dual role in the initiator identity of N-formylmethionyl-tRNA by promoting its recognition by IF2 and preventing the misappropriation of this tRNA by the elongation apparatus. The polypeptide is Methionyl-tRNA formyltransferase (Clostridium botulinum (strain Alaska E43 / Type E3)).